A 60-amino-acid chain; its full sequence is MEKKFLDILVCPVTKGRLEYHQDKQELWSRQAKLAYPIKDGIPYMLENEARALSEEELKA.

Belongs to the UPF0434 family.

The polypeptide is UPF0434 protein NMA0874 (Neisseria meningitidis serogroup A / serotype 4A (strain DSM 15465 / Z2491)).